A 310-amino-acid polypeptide reads, in one-letter code: Ribosomal RNA small subunit methyltransferase H (310 aa).

S-adenosyl-L-methionine contacts are provided by residues 32–34, aspartate 52, phenylalanine 79, aspartate 100, and glutamine 107; that span reads AGH.

The protein belongs to the methyltransferase superfamily. RsmH family.

It is found in the cytoplasm. It catalyses the reaction cytidine(1402) in 16S rRNA + S-adenosyl-L-methionine = N(4)-methylcytidine(1402) in 16S rRNA + S-adenosyl-L-homocysteine + H(+). Specifically methylates the N4 position of cytidine in position 1402 (C1402) of 16S rRNA. This is Ribosomal RNA small subunit methyltransferase H from Halalkalibacterium halodurans (strain ATCC BAA-125 / DSM 18197 / FERM 7344 / JCM 9153 / C-125) (Bacillus halodurans).